A 356-amino-acid chain; its full sequence is Torsin-like protein (356 aa).

Positions 1–18 are cleaved as a signal peptide; the sequence is MKLDYVLLLLFHLCFVNT. 110–117 is a binding site for ATP; the sequence is GYTGSGKN. Asn125 and Asn250 each carry an N-linked (GlcNAc...) asparagine glycan.

This sequence belongs to the ClpA/ClpB family. Torsin subfamily.

It is found in the endoplasmic reticulum lumen. Its function is as follows. May serve as a molecular chaperone assisting in the proper folding of secreted and/or membrane proteins. The protein is Torsin-like protein (ooc-5) of Caenorhabditis elegans.